We begin with the raw amino-acid sequence, 227 residues long: GFP-like non-fluorescent chromoprotein (227 aa).

Residues 63–65 (AYG) constitute a cross-link (5-imidazolinone (Ala-Gly)). Tyr-64 carries the post-translational modification 2,3-didehydrotyrosine.

It belongs to the GFP family. In terms of assembly, homotetramer. In terms of processing, contains a chromophore consisting of modified amino acid residues. The chromophore is formed by autocatalytic backbone condensation between Xaa-N and Gly-(N+2), and oxidation of Tyr-(N+1) to didehydrotyrosine. Maturation of the chromophore requires nothing other than molecular oxygen. The precise stereochemistry of the tyrosine has not been determined.

Functionally, non-fluorescent pigment protein that is mauve in color. The wild-type form is non-fluorescent. The polypeptide is GFP-like non-fluorescent chromoprotein (Condylactis gigantea (Giant Caribbean anemone)).